A 568-amino-acid chain; its full sequence is Proline--tRNA ligase (568 aa).

Belongs to the class-II aminoacyl-tRNA synthetase family. ProS type 1 subfamily. As to quaternary structure, homodimer.

It is found in the cytoplasm. It catalyses the reaction tRNA(Pro) + L-proline + ATP = L-prolyl-tRNA(Pro) + AMP + diphosphate. Catalyzes the attachment of proline to tRNA(Pro) in a two-step reaction: proline is first activated by ATP to form Pro-AMP and then transferred to the acceptor end of tRNA(Pro). As ProRS can inadvertently accommodate and process non-cognate amino acids such as alanine and cysteine, to avoid such errors it has two additional distinct editing activities against alanine. One activity is designated as 'pretransfer' editing and involves the tRNA(Pro)-independent hydrolysis of activated Ala-AMP. The other activity is designated 'posttransfer' editing and involves deacylation of mischarged Ala-tRNA(Pro). The misacylated Cys-tRNA(Pro) is not edited by ProRS. The chain is Proline--tRNA ligase from Listeria innocua serovar 6a (strain ATCC BAA-680 / CLIP 11262).